The following is a 245-amino-acid chain: 1-(5-phosphoribosyl)-5-[(5-phosphoribosylamino)methylideneamino] imidazole-4-carboxamide isomerase (245 aa).

Catalysis depends on D8, which acts as the Proton acceptor. D129 acts as the Proton donor in catalysis.

It belongs to the HisA/HisF family.

Its subcellular location is the cytoplasm. The catalysed reaction is 1-(5-phospho-beta-D-ribosyl)-5-[(5-phospho-beta-D-ribosylamino)methylideneamino]imidazole-4-carboxamide = 5-[(5-phospho-1-deoxy-D-ribulos-1-ylimino)methylamino]-1-(5-phospho-beta-D-ribosyl)imidazole-4-carboxamide. Its pathway is amino-acid biosynthesis; L-histidine biosynthesis; L-histidine from 5-phospho-alpha-D-ribose 1-diphosphate: step 4/9. The sequence is that of 1-(5-phosphoribosyl)-5-[(5-phosphoribosylamino)methylideneamino] imidazole-4-carboxamide isomerase from Geotalea uraniireducens (strain Rf4) (Geobacter uraniireducens).